The chain runs to 190 residues: Elongation factor P-like protein (190 aa).

The protein belongs to the elongation factor P family.

This is Elongation factor P-like protein from Pseudoalteromonas atlantica (strain T6c / ATCC BAA-1087).